The primary structure comprises 343 residues: Protein FAM50A-B (343 aa).

2 disordered regions span residues 1 to 25 (MAQYKGAASEAGRAMQLMKKREKQR) and 125 to 181 (EEDE…EEEN). The segment covering 125–142 (EEDEECEDEESEEEEEEY) has biased composition (acidic residues). The span at 172–181 (PDRDREEEEN) shows a compositional bias: basic and acidic residues.

This sequence belongs to the FAM50 family.

The protein localises to the nucleus. In terms of biological role, probably involved in the regulation of pre-mRNA splicing. The sequence is that of Protein FAM50A-B (fam50a-b) from Xenopus laevis (African clawed frog).